Here is a 323-residue protein sequence, read N- to C-terminus: tRNA U34 carboxymethyltransferase (323 aa).

Residues Lys91, Trp105, Lys110, Gly130, 152 to 154 (DPT), 181 to 182 (IE), Met196, Tyr200, and Arg315 each bind carboxy-S-adenosyl-L-methionine.

This sequence belongs to the class I-like SAM-binding methyltransferase superfamily. CmoB family. As to quaternary structure, homotetramer.

The catalysed reaction is carboxy-S-adenosyl-L-methionine + 5-hydroxyuridine(34) in tRNA = 5-carboxymethoxyuridine(34) in tRNA + S-adenosyl-L-homocysteine + H(+). Functionally, catalyzes carboxymethyl transfer from carboxy-S-adenosyl-L-methionine (Cx-SAM) to 5-hydroxyuridine (ho5U) to form 5-carboxymethoxyuridine (cmo5U) at position 34 in tRNAs. This chain is tRNA U34 carboxymethyltransferase, found in Escherichia coli O7:K1 (strain IAI39 / ExPEC).